Consider the following 187-residue polypeptide: Elongation factor P (187 aa).

This sequence belongs to the elongation factor P family.

Its subcellular location is the cytoplasm. The protein operates within protein biosynthesis; polypeptide chain elongation. Its function is as follows. Involved in peptide bond synthesis. Stimulates efficient translation and peptide-bond synthesis on native or reconstituted 70S ribosomes in vitro. Probably functions indirectly by altering the affinity of the ribosome for aminoacyl-tRNA, thus increasing their reactivity as acceptors for peptidyl transferase. The protein is Elongation factor P of Prochlorococcus marinus (strain NATL2A).